The primary structure comprises 127 residues: Glycine cleavage system H protein (127 aa).

The region spanning N22 to K104 is the Lipoyl-binding domain. At K63 the chain carries N6-lipoyllysine.

Belongs to the GcvH family. As to quaternary structure, the glycine cleavage system is composed of four proteins: P, T, L and H. Requires (R)-lipoate as cofactor.

In terms of biological role, the glycine cleavage system catalyzes the degradation of glycine. The H protein shuttles the methylamine group of glycine from the P protein to the T protein. Is also involved in protein lipoylation via its role as an octanoyl/lipoyl carrier protein intermediate. This Geobacillus kaustophilus (strain HTA426) protein is Glycine cleavage system H protein.